A 432-amino-acid chain; its full sequence is Tol-Pal system protein TolB (432 aa).

The first 24 residues, 1-24 (MKLVTRMWSILIVFFLAVLQPAQA), serve as a signal peptide directing secretion.

Belongs to the TolB family. In terms of assembly, the Tol-Pal system is composed of five core proteins: the inner membrane proteins TolA, TolQ and TolR, the periplasmic protein TolB and the outer membrane protein Pal. They form a network linking the inner and outer membranes and the peptidoglycan layer.

It is found in the periplasm. Functionally, part of the Tol-Pal system, which plays a role in outer membrane invagination during cell division and is important for maintaining outer membrane integrity. In Pasteurella multocida (strain Pm70), this protein is Tol-Pal system protein TolB.